Here is a 274-residue protein sequence, read N- to C-terminus: Nickel/cobalt efflux system RcnA (274 aa).

At 1-12 (MTEFTTLLQQGN) the chain is on the periplasmic side. The chain crosses the membrane as a helical span at residues 13 to 33 (AWFFIPSAILLGALHGLEPGH). Residues 34–56 (SKTMMAAFIIAIKGTIKQAVMLG) lie on the Cytoplasmic side of the membrane. A helical transmembrane segment spans residues 57 to 77 (LAATISHTAVVWLIAFGGMVI). Residues 78–86 (SKRFTAQSA) are Periplasmic-facing. The helical transmembrane segment at 87-107 (EPWLQLISAVIIISTAFWMFW) threads the bilayer. Topologically, residues 108–174 (RTWRGERNWL…FDGREVTNWQ (67 aa)) are cytoplasmic. Residues 127–137 (HHHHDHEDHHD) are compositionally biased toward basic and acidic residues. A disordered region spans residues 127 to 153 (HHHHDHEDHHDHGHHHHHEHGEYQDAH). The chain crosses the membrane as a helical span at residues 175 to 195 (ILLFGLTGGLIPCPAAITVLL). Topologically, residues 196-209 (ICIQLKALTLGATL) are periplasmic. A helical membrane pass occupies residues 210 to 230 (VVSFSLGLALTLVTVSVGAAI). The Cytoplasmic segment spans residues 231 to 251 (SVQQVAKRWSGFNTLAKRAPY). The chain crosses the membrane as a helical span at residues 252–272 (FSSLLIGLVGVYMGVHGFMGI). Residues 273–274 (MR) lie on the Periplasmic side of the membrane.

The protein belongs to the NiCoT transporter (TC 2.A.52) family. RcnA subfamily.

Its subcellular location is the cell inner membrane. Functionally, efflux system for nickel and cobalt. The polypeptide is Nickel/cobalt efflux system RcnA (rcnA) (Escherichia coli O6:K15:H31 (strain 536 / UPEC)).